Here is a 1558-residue protein sequence, read N- to C-terminus: ABC transporter NFT1 (1558 aa).

Topologically, residues 1 to 29 (MIKNGTCPYWERDDLSECARREYIEFKFP) are extracellular. A glycan (N-linked (GlcNAc...) asparagine) is linked at Asn4. The helical transmembrane segment at 30–50 (LFILLTGMIYAFCKVFRAFYL) threads the bilayer. Residues 51 to 103 (RGKNHTNEAPEFEEQGNGNHEYARFSVLRLKSAWESRSFCNVNNRSTFDKFKK) are Cytoplasmic-facing. The helical transmembrane segment at 104-124 (FIEGAFIVLQLTIHLYILSSM) threads the bilayer. The Extracellular portion of the chain corresponds to 125-130 (PMDNKK). Residues 131–151 (FFHQGFLVQMFLWILLLVVIT) form a helical membrane-spanning segment. Residues 152–169 (LRLISASQSFRWVLACKR) are Cytoplasmic-facing. A helical transmembrane segment spans residues 170 to 190 (DLWAVSFYSYASLFTLSILPL). The Extracellular portion of the chain corresponds to 191-201 (RSVFIGKIKDK). Residues 202 to 222 (IMVKYIISETFIDLALLLLLS) traverse the membrane as a helical segment. The Cytoplasmic segment spans residues 223 to 302 (TSSIEGTRYS…SSKKGRLLPN (80 aa)). Residues 303 to 323 (IICYFKAVFISQLFLAFVSSF) traverse the membrane as a helical segment. The 311-residue stretch at 311 to 621 (FISQLFLAFV…IASTVSLLIQ (311 aa)) folds into the ABC transmembrane type-1 1 domain. The Extracellular segment spans residues 324–351 (LNFVPSLLMPRILSYVNDPKSKSWNLVS). A helical transmembrane segment spans residues 352-374 (LYVSSMLVSKIIATTCRGQGLFL). At 375–449 (GEKGTMQLRT…VMSIDAFKVS (75 aa)) the chain is on the cytoplasmic side. A disordered region spans residues 410–434 (NASTSFEENPDSSEAEPRKKSSRKD). A compositionally biased stretch (basic and acidic residues) spans 424–434 (AEPRKKSSRKD). Residues 450–470 (EAMNTFYLACEAVFMTVTALM) traverse the membrane as a helical segment. The Extracellular portion of the chain corresponds to 471–481 (ILYSLLGWSAF). Residues 482–504 (AGTFALLAMIPLNFWCATFYGNY) form a helical membrane-spanning segment. Topologically, residues 505 to 558 (QADQLILTDKRTSGISEALNSIRVIKLLAWENLFYQKIINVRDGEIRLLKKKAT) are cytoplasmic. A helical membrane pass occupies residues 559–579 (IFFLNHLIWFFGPTLVSAITF). The Extracellular segment spans residues 580-584 (SVFIK). Residues 585–605 (FQNQTLTPTIAFTALSLFAIL) traverse the membrane as a helical segment. At 606-953 (RTPMDQIAST…KFSAYKWLAD (348 aa)) the chain is on the cytoplasmic side. Residues 651 to 892 (FGFEDASMEW…NEFLRESINN (242 aa)) form the ABC transporter 1 domain. 686–693 (GPTGSGKS) contributes to the ATP binding site. Residues 892–901 (NDSKNTTHNQ) show a composition bias toward polar residues. Positions 892–926 (NDSKNTTHNQIDLKRSTTSKKTKNGDPEGGNSQDE) are disordered. The chain crosses the membrane as a helical span at residues 954 to 974 (YFGGLGVVFVFTSSSILIHGI). The region spanning 961-1251 (VFVFTSSSIL…IIKVFSSVEL (291 aa)) is the ABC transmembrane type-1 2 domain. Residues 975-1013 (TLSQGFWLRYWLDTGSSGSKSTWLYRIVEGHSNIYFLLT) are Extracellular-facing. The helical transmembrane segment at 1014 to 1034 (YIIIGLVSSFLTSGKVWIAII) threads the bilayer. Residues 1035-1082 (SGTNVTKKIFAKLLSSILYAKLRFHNVTPTGRIMNRFSKDMDIIDQQL) lie on the Cytoplasmic side of the membrane. A helical transmembrane segment spans residues 1083–1105 (IPNFEGLSYSVVVCLWIILLIGY). The Extracellular portion of the chain corresponds to 1106–1109 (VTPQ). Residues 1110 to 1132 (FLLFAIPLCALYYTVCTLYLRAS) traverse the membrane as a helical segment. At 1133 to 1199 (RELKRIDNIN…ATEWITYRVD (67 aa)) the chain is on the cytoplasmic side. The helical transmembrane segment at 1200–1220 (IIGTLVLFSSSVMIIMKASYL) threads the bilayer. Residues 1221–1222 (DA) lie on the Extracellular side of the membrane. The chain crosses the membrane as a helical span at residues 1223-1243 (GLAGILLSNAFSFTETAQWII). At 1244–1558 (KVFSSVELLM…LAKVSFDNKR (315 aa)) the chain is on the cytoplasmic side. The region spanning 1285–1538 (VELKNLSLRY…RNTIFYRLCR (254 aa)) is the ABC transporter 2 domain. 1319–1326 (GRTGAGKS) provides a ligand contact to ATP.

The protein belongs to the ABC transporter superfamily. ABCC family. Conjugate transporter (TC 3.A.1.208) subfamily.

It is found in the membrane. The chain is ABC transporter NFT1 (NFT1) from Saccharomyces cerevisiae (Baker's yeast).